Here is a 691-residue protein sequence, read N- to C-terminus: Elongation factor G (691 aa).

Positions 8–283 constitute a tr-type G domain; that stretch reads EDYRNFGIMA…AVVDYLPSPV (276 aa). GTP is bound by residues 17–24, 81–85, and 135–138; these read AHIDAGKT, DTPGH, and NKMD.

This sequence belongs to the TRAFAC class translation factor GTPase superfamily. Classic translation factor GTPase family. EF-G/EF-2 subfamily.

Its subcellular location is the cytoplasm. Functionally, catalyzes the GTP-dependent ribosomal translocation step during translation elongation. During this step, the ribosome changes from the pre-translocational (PRE) to the post-translocational (POST) state as the newly formed A-site-bound peptidyl-tRNA and P-site-bound deacylated tRNA move to the P and E sites, respectively. Catalyzes the coordinated movement of the two tRNA molecules, the mRNA and conformational changes in the ribosome. This chain is Elongation factor G, found in Methylorubrum populi (strain ATCC BAA-705 / NCIMB 13946 / BJ001) (Methylobacterium populi).